The following is a 504-amino-acid chain: Glutamate--tRNA ligase (504 aa).

The 'HIGH' region signature appears at 27–37 (PSPTGTPHVGL). The 'KMSKS' region signature appears at 271–275 (KLSKR). An ATP-binding site is contributed by K274.

The protein belongs to the class-I aminoacyl-tRNA synthetase family. Glutamate--tRNA ligase type 1 subfamily. Monomer.

It localises to the cytoplasm. The enzyme catalyses tRNA(Glu) + L-glutamate + ATP = L-glutamyl-tRNA(Glu) + AMP + diphosphate. Its function is as follows. Catalyzes the attachment of glutamate to tRNA(Glu) in a two-step reaction: glutamate is first activated by ATP to form Glu-AMP and then transferred to the acceptor end of tRNA(Glu). The polypeptide is Glutamate--tRNA ligase (Arthrobacter sp. (strain FB24)).